A 173-amino-acid polypeptide reads, in one-letter code: Peptidoglycan-associated lipoprotein (173 aa).

The N-terminal stretch at 1–21 (MQLNKVLKGLMIALPVMAIAA) is a signal peptide. A lipid anchor (N-palmitoyl cysteine) is attached at cysteine 22. Cysteine 22 carries the S-diacylglycerol cysteine lipid modification. The tract at residues 30–58 (NDGSEGMLGAGTGMDANGGNGNMSSEEQA) is disordered. Residues 35-50 (GMLGAGTGMDANGGNG) show a composition bias toward gly residues. Residues 60–173 (LQMQQLQQNN…SKNRRAVLVY (114 aa)) enclose the OmpA-like domain.

It belongs to the Pal lipoprotein family. As to quaternary structure, the Tol-Pal system is composed of five core proteins: the inner membrane proteins TolA, TolQ and TolR, the periplasmic protein TolB and the outer membrane protein Pal. They form a network linking the inner and outer membranes and the peptidoglycan layer.

It is found in the cell outer membrane. Part of the Tol-Pal system, which plays a role in outer membrane invagination during cell division and is important for maintaining outer membrane integrity. In Escherichia coli O157:H7, this protein is Peptidoglycan-associated lipoprotein.